The chain runs to 304 residues: Acetyl-coenzyme A carboxylase carboxyl transferase subunit beta (304 aa).

One can recognise a CoA carboxyltransferase N-terminal domain in the interval 25-294; that stretch reads LWIKCPETGE…KAVKRDTATE (270 aa).

The protein belongs to the AccD/PCCB family. Acetyl-CoA carboxylase is a heterohexamer composed of biotin carboxyl carrier protein (AccB), biotin carboxylase (AccC) and two subunits each of ACCase subunit alpha (AccA) and ACCase subunit beta (AccD).

It is found in the cytoplasm. The catalysed reaction is N(6)-carboxybiotinyl-L-lysyl-[protein] + acetyl-CoA = N(6)-biotinyl-L-lysyl-[protein] + malonyl-CoA. Its pathway is lipid metabolism; malonyl-CoA biosynthesis; malonyl-CoA from acetyl-CoA: step 1/1. Its function is as follows. Component of the acetyl coenzyme A carboxylase (ACC) complex. Biotin carboxylase (BC) catalyzes the carboxylation of biotin on its carrier protein (BCCP) and then the CO(2) group is transferred by the transcarboxylase to acetyl-CoA to form malonyl-CoA. This chain is Acetyl-coenzyme A carboxylase carboxyl transferase subunit beta, found in Rhizobium meliloti (strain 1021) (Ensifer meliloti).